Here is a 178-residue protein sequence, read N- to C-terminus: Large ribosomal subunit protein uL13m (178 aa).

Serine 2 is modified (N-acetylserine).

This sequence belongs to the universal ribosomal protein uL13 family. As to quaternary structure, component of the mitochondrial large ribosomal subunit (mt-LSU). Mature mammalian 55S mitochondrial ribosomes consist of a small (28S) and a large (39S) subunit. The 28S small subunit contains a 12S ribosomal RNA (12S mt-rRNA) and 30 different proteins. The 39S large subunit contains a 16S rRNA (16S mt-rRNA), a copy of mitochondrial valine transfer RNA (mt-tRNA(Val)), which plays an integral structural role, and 52 different proteins. Interacts with OXA1L.

It localises to the mitochondrion. This is Large ribosomal subunit protein uL13m (MRPL13) from Homo sapiens (Human).